The primary structure comprises 224 residues: Large ribosomal subunit protein uL4 (224 aa).

Residues 52–109 (AAARQGTHSTKTRGDVSGGGRKPYRQKGTGRARQGSTRTPQFTGGGVVHGPKPRDYSQ) are disordered.

This sequence belongs to the universal ribosomal protein uL4 family. In terms of assembly, part of the 50S ribosomal subunit.

One of the primary rRNA binding proteins, this protein initially binds near the 5'-end of the 23S rRNA. It is important during the early stages of 50S assembly. It makes multiple contacts with different domains of the 23S rRNA in the assembled 50S subunit and ribosome. Functionally, forms part of the polypeptide exit tunnel. The sequence is that of Large ribosomal subunit protein uL4 from Mycobacterium ulcerans (strain Agy99).